The sequence spans 231 residues: Flagellar L-ring protein (231 aa).

A signal peptide spans Met1 to Gly18. Cys19 carries N-palmitoyl cysteine lipidation. Cys19 carries the S-diacylglycerol cysteine lipid modification.

This sequence belongs to the FlgH family. In terms of assembly, the basal body constitutes a major portion of the flagellar organelle and consists of four rings (L,P,S, and M) mounted on a central rod.

Its subcellular location is the cell outer membrane. The protein resides in the bacterial flagellum basal body. Its function is as follows. Assembles around the rod to form the L-ring and probably protects the motor/basal body from shearing forces during rotation. The polypeptide is Flagellar L-ring protein (Pseudomonas entomophila (strain L48)).